The primary structure comprises 123 residues: Late histone H2B.L3 (123 aa).

Residues 1 to 10 (MPAKAQAAGK) are compositionally biased toward low complexity. Residues 1 to 32 (MPAKAQAAGKKGSKKAKAPKPSGDKKRRRKRK) form a disordered region. An O-linked (GlcNAc) serine glycan is attached at serine 110. Lysine 118 is covalently cross-linked (Glycyl lysine isopeptide (Lys-Gly) (interchain with G-Cter in ubiquitin)).

This sequence belongs to the histone H2B family. In terms of assembly, the nucleosome is a histone octamer containing two molecules each of H2A, H2B, H3 and H4 assembled in one H3-H4 heterotetramer and two H2A-H2B heterodimers. The octamer wraps approximately 147 bp of DNA. Monoubiquitination of Lys-118 gives a specific tag for epigenetic transcriptional activation and is also prerequisite for histone H3 'Lys-4' and 'Lys-79' methylation. Post-translationally, glcNAcylation at Ser-110 promotes monoubiquitination of Lys-118. It fluctuates in response to extracellular glucose, and associates with transcribed genes.

Its subcellular location is the nucleus. The protein localises to the chromosome. Core component of nucleosome. Nucleosomes wrap and compact DNA into chromatin, limiting DNA accessibility to the cellular machineries which require DNA as a template. Histones thereby play a central role in transcription regulation, DNA repair, DNA replication and chromosomal stability. DNA accessibility is regulated via a complex set of post-translational modifications of histones, also called histone code, and nucleosome remodeling. In Strongylocentrotus purpuratus (Purple sea urchin), this protein is Late histone H2B.L3.